A 112-amino-acid chain; its full sequence is Gastrula zinc finger protein XlCGF9.1 (112 aa).

C2H2-type zinc fingers lie at residues 6–28, 34–56, 62–84, and 90–112; these read FICS…MKIH, FCCP…ERTH, FTCP…RIIH, and YSCP…FKIH.

This sequence belongs to the krueppel C2H2-type zinc-finger protein family.

It is found in the nucleus. Its function is as follows. May be involved in transcriptional regulation. This is Gastrula zinc finger protein XlCGF9.1 from Xenopus laevis (African clawed frog).